Here is a 163-residue protein sequence, read N- to C-terminus: Nucleotide-binding protein PC1_1036 (163 aa).

This sequence belongs to the YajQ family.

Its function is as follows. Nucleotide-binding protein. This is Nucleotide-binding protein PC1_1036 from Pectobacterium carotovorum subsp. carotovorum (strain PC1).